The sequence spans 397 residues: Dual-specificity RNA methyltransferase RlmN (397 aa).

The active-site Proton acceptor is glutamate 120. In terms of domain architecture, Radical SAM core spans 126–369 (ETDRGTLCVS…VRTPRGRDIL (244 aa)). Cysteines 133 and 372 form a disulfide. Positions 140, 144, and 147 each coordinate [4Fe-4S] cluster. S-adenosyl-L-methionine is bound by residues 198–199 (GE), serine 230, 252–254 (SLH), and asparagine 329. Catalysis depends on cysteine 372, which acts as the S-methylcysteine intermediate.

The protein belongs to the radical SAM superfamily. RlmN family. The cofactor is [4Fe-4S] cluster.

The protein resides in the cytoplasm. It carries out the reaction adenosine(2503) in 23S rRNA + 2 reduced [2Fe-2S]-[ferredoxin] + 2 S-adenosyl-L-methionine = 2-methyladenosine(2503) in 23S rRNA + 5'-deoxyadenosine + L-methionine + 2 oxidized [2Fe-2S]-[ferredoxin] + S-adenosyl-L-homocysteine. The enzyme catalyses adenosine(37) in tRNA + 2 reduced [2Fe-2S]-[ferredoxin] + 2 S-adenosyl-L-methionine = 2-methyladenosine(37) in tRNA + 5'-deoxyadenosine + L-methionine + 2 oxidized [2Fe-2S]-[ferredoxin] + S-adenosyl-L-homocysteine. Its function is as follows. Specifically methylates position 2 of adenine 2503 in 23S rRNA and position 2 of adenine 37 in tRNAs. m2A2503 modification seems to play a crucial role in the proofreading step occurring at the peptidyl transferase center and thus would serve to optimize ribosomal fidelity. This is Dual-specificity RNA methyltransferase RlmN from Nitrobacter winogradskyi (strain ATCC 25391 / DSM 10237 / CIP 104748 / NCIMB 11846 / Nb-255).